We begin with the raw amino-acid sequence, 308 residues long: Acetaldehyde dehydrogenase 2 (308 aa).

NAD(+) is bound at residue 9–12 (SGNI). C127 functions as the Acyl-thioester intermediate in the catalytic mechanism. Residues 158–166 (SAGPGTRAN) and N286 each bind NAD(+).

The protein belongs to the acetaldehyde dehydrogenase family.

The enzyme catalyses acetaldehyde + NAD(+) + CoA = acetyl-CoA + NADH + H(+). The protein is Acetaldehyde dehydrogenase 2 of Parafrankia sp. (strain EAN1pec).